The following is a 194-amino-acid chain: Leucyl/phenylalanyl-tRNA--protein transferase (194 aa).

This sequence belongs to the L/F-transferase family.

It is found in the cytoplasm. It carries out the reaction N-terminal L-lysyl-[protein] + L-leucyl-tRNA(Leu) = N-terminal L-leucyl-L-lysyl-[protein] + tRNA(Leu) + H(+). The enzyme catalyses N-terminal L-arginyl-[protein] + L-leucyl-tRNA(Leu) = N-terminal L-leucyl-L-arginyl-[protein] + tRNA(Leu) + H(+). It catalyses the reaction L-phenylalanyl-tRNA(Phe) + an N-terminal L-alpha-aminoacyl-[protein] = an N-terminal L-phenylalanyl-L-alpha-aminoacyl-[protein] + tRNA(Phe). Its function is as follows. Functions in the N-end rule pathway of protein degradation where it conjugates Leu, Phe and, less efficiently, Met from aminoacyl-tRNAs to the N-termini of proteins containing an N-terminal arginine or lysine. This is Leucyl/phenylalanyl-tRNA--protein transferase from Chlorobium phaeobacteroides (strain DSM 266 / SMG 266 / 2430).